The sequence spans 252 residues: MLKLASLNRIVLTGTLLAAAGLASGCSSIDRLSQIGESPKLTAIDNPTTQPGYKPVQMPMPKPETVSYNANSLWRNGSRAFFRDQRAARVGDLLTVTVNFTDRANIANQTQRSRVSKDDSGIADFAGSKLLGGTAQKVLPGRLLTTDSESLSDGKGLVQRQENLQTSVATVVTQVLPNGNLVVEGKQEIRVNFEIRELIVAGIVRPEDIQSDNTIDSSKIAQARIAYGGRGQITDVQQPRYGQQVMDVLLPF.

An N-terminal signal peptide occupies residues 1–25 (MLKLASLNRIVLTGTLLAAAGLASG). C26 carries N-palmitoyl cysteine lipidation. Residue C26 is the site of S-diacylglycerol cysteine attachment.

This sequence belongs to the FlgH family. The basal body constitutes a major portion of the flagellar organelle and consists of four rings (L,P,S, and M) mounted on a central rod.

The protein localises to the cell outer membrane. It localises to the bacterial flagellum basal body. Its function is as follows. Assembles around the rod to form the L-ring and probably protects the motor/basal body from shearing forces during rotation. In Nitrobacter winogradskyi (strain ATCC 25391 / DSM 10237 / CIP 104748 / NCIMB 11846 / Nb-255), this protein is Flagellar L-ring protein.